The sequence spans 422 residues: CinA-like protein (422 aa).

It belongs to the CinA family.

The chain is CinA-like protein from Mycolicibacterium gilvum (strain PYR-GCK) (Mycobacterium gilvum (strain PYR-GCK)).